Consider the following 1401-residue polypeptide: DNA-directed RNA polymerase subunit beta'' (1401 aa).

The Zn(2+) site is built by Cys224, Cys294, Cys301, and Cys304.

It belongs to the RNA polymerase beta' chain family. RpoC2 subfamily. As to quaternary structure, in plastids the minimal PEP RNA polymerase catalytic core is composed of four subunits: alpha, beta, beta', and beta''. When a (nuclear-encoded) sigma factor is associated with the core the holoenzyme is formed, which can initiate transcription. It depends on Zn(2+) as a cofactor.

It is found in the plastid. The protein localises to the chloroplast. The enzyme catalyses RNA(n) + a ribonucleoside 5'-triphosphate = RNA(n+1) + diphosphate. In terms of biological role, DNA-dependent RNA polymerase catalyzes the transcription of DNA into RNA using the four ribonucleoside triphosphates as substrates. This is DNA-directed RNA polymerase subunit beta'' from Nymphaea alba (White water-lily).